Here is a 274-residue protein sequence, read N- to C-terminus: Rhamnulose-1-phosphate aldolase (274 aa).

Residue glutamate 117 is part of the active site. Residues histidine 141, histidine 143, and histidine 212 each coordinate Zn(2+).

Belongs to the aldolase class II family. RhaD subfamily. In terms of assembly, homotetramer. Zn(2+) serves as cofactor.

It is found in the cytoplasm. The catalysed reaction is L-rhamnulose 1-phosphate = (S)-lactaldehyde + dihydroxyacetone phosphate. It functions in the pathway carbohydrate degradation; L-rhamnose degradation; glycerone phosphate from L-rhamnose: step 3/3. Functionally, catalyzes the reversible cleavage of L-rhamnulose-1-phosphate to dihydroxyacetone phosphate (DHAP) and L-lactaldehyde. This is Rhamnulose-1-phosphate aldolase from Escherichia fergusonii (strain ATCC 35469 / DSM 13698 / CCUG 18766 / IAM 14443 / JCM 21226 / LMG 7866 / NBRC 102419 / NCTC 12128 / CDC 0568-73).